The primary structure comprises 171 residues: uncharacterized protein (171 aa).

This is an uncharacterized protein from Saccharomyces cerevisiae (strain ATCC 204508 / S288c) (Baker's yeast).